The sequence spans 271 residues: Extent of cell elongation protein 1 (271 aa).

Residues 1–18 form the signal peptide; the sequence is MKFSKIACATVFALSSQA. The chain crosses the membrane as a helical span at residues 62–82; the sequence is SIIGIIMGILGNIPQVIQIIM.

Polymerizes in solution to form membrane pores. Post-translationally, cleavage by KEX2 generates 8 peptides ECE1-I to ECE1-VIII, all terminating in Lys-Arg. Only peptide ECE1-III, called candidalysin, shows toxin activity.

The protein localises to the secreted. Its subcellular location is the host cell membrane. Its function is as follows. Secreted protein cleaved by KEX2 in 8 similar peptides (ECE1-I to ECE1-VIII). Stimulates biofilm formation. In terms of biological role, acts as a cytolytic peptide toxin that directly damages host epithelial membranes, triggers a danger response signaling pathway and activates epithelial immunity. Polymerizes in solution to form membrane pores to damage epithelial cells. Induces calcium influx, oxidative stress, mitochondrial dysfunction and ATP depletion in host cells, leading to epithelial necrosis. Serves as a danger signal that potentiates the immune response, and more specifically IL-17 response. Induces cytokine/chemokine secretion by host (especially CCL2/3/4, CXCL1 and S100A8), neutrophil recruitment, and promotes mortality in zebrafish and murine models of systemic fungal infection. Mediates distinct epithelial inflammatory responses through p38, EGFR-ERK and TREM-1/DAP12 pathways. Acts as one of the hypha-derived drivers of NLRP3 inflammasome responses in primary macrophages and thus contributes to the capacity to induce maturation and secretion of IL-1beta from primary macrophages. Stimulates mast cells by mediating cross-talk between signaling pathways activated by the dectin-1 receptor and MAPKs. Enables escape via the gasdermin-mediated pyroptosis, as well as a cell lysis pathway associated with macrophage extracellular trap formation termed ETosis. Acts as the main hemolytic factor of C.albicans. As an exotoxine, also promotes alcohol-associated liver disease or oral carcinogenesis. This is Extent of cell elongation protein 1 from Candida albicans (strain SC5314 / ATCC MYA-2876) (Yeast).